A 293-amino-acid chain; its full sequence is Protease HtpX homolog (293 aa).

Transmembrane regions (helical) follow at residues 4–24 (IFLF…TLRV) and 40–60 (SLLI…LLIS). Residue His146 participates in Zn(2+) binding. Glu147 is an active-site residue. His150 lines the Zn(2+) pocket. 2 helical membrane passes run 161 to 181 (LIQG…GYFI) and 197 to 217 (FITV…IVAW). Glu223 lines the Zn(2+) pocket.

Belongs to the peptidase M48B family. Requires Zn(2+) as cofactor.

The protein resides in the cell inner membrane. This Bordetella petrii (strain ATCC BAA-461 / DSM 12804 / CCUG 43448) protein is Protease HtpX homolog.